The following is a 79-amino-acid chain: uncharacterized protein (79 aa).

Its subcellular location is the mitochondrion. This is an uncharacterized protein from Oenothera berteroana (Bertero's evening primrose).